Reading from the N-terminus, the 218-residue chain is Protein-L-isoaspartate O-methyltransferase (218 aa).

Ser52 is an active-site residue.

The protein belongs to the methyltransferase superfamily. L-isoaspartyl/D-aspartyl protein methyltransferase family.

It localises to the cytoplasm. It carries out the reaction [protein]-L-isoaspartate + S-adenosyl-L-methionine = [protein]-L-isoaspartate alpha-methyl ester + S-adenosyl-L-homocysteine. Functionally, catalyzes the methyl esterification of L-isoaspartyl residues in peptides and proteins that result from spontaneous decomposition of normal L-aspartyl and L-asparaginyl residues. It plays a role in the repair and/or degradation of damaged proteins. The protein is Protein-L-isoaspartate O-methyltransferase of Rhodopseudomonas palustris (strain ATCC BAA-98 / CGA009).